The sequence spans 334 residues: GTP 3',8-cyclase (334 aa).

In terms of domain architecture, Radical SAM core spans 8–244; it reads RYGRPLRDLR…GEVAQRHAFA (237 aa). Arg-17 contributes to the GTP binding site. [4Fe-4S] cluster contacts are provided by Cys-24 and Cys-28. Tyr-30 is an S-adenosyl-L-methionine binding site. Cys-31 is a binding site for [4Fe-4S] cluster. A GTP-binding site is contributed by Arg-70. Gly-74 contacts S-adenosyl-L-methionine. Thr-101 is a GTP binding site. Ser-125 contributes to the S-adenosyl-L-methionine binding site. Lys-163 contributes to the GTP binding site. Residue Met-197 participates in S-adenosyl-L-methionine binding. Positions 261 and 264 each coordinate [4Fe-4S] cluster. 266 to 268 serves as a coordination point for GTP; it reads RAR. Cys-278 is a binding site for [4Fe-4S] cluster.

Belongs to the radical SAM superfamily. MoaA family. Monomer and homodimer. It depends on [4Fe-4S] cluster as a cofactor.

The catalysed reaction is GTP + AH2 + S-adenosyl-L-methionine = (8S)-3',8-cyclo-7,8-dihydroguanosine 5'-triphosphate + 5'-deoxyadenosine + L-methionine + A + H(+). Its pathway is cofactor biosynthesis; molybdopterin biosynthesis. Its function is as follows. Catalyzes the cyclization of GTP to (8S)-3',8-cyclo-7,8-dihydroguanosine 5'-triphosphate. The chain is GTP 3',8-cyclase from Xanthomonas axonopodis pv. citri (strain 306).